The following is a 677-amino-acid chain: Pannexin-2 (677 aa).

At 11 to 53 the chain is on the cytoplasmic side; it reads MATALLAGEKLRELILPGSQDDKAGALAALLLQLKLELPFDRV. Residues 54–74 form a helical membrane-spanning segment; that stretch reads VTIGTVLVPILLVTLVFTKNF. At 75–125 the chain is on the extracellular side; it reads AEEPIYCYTPHNFTRDQALYARGYCWTELRDALPGVDASLWPSLFEHKFLP. N-linked (GlcNAc...) asparagine glycosylation is present at Asn86. A helical transmembrane segment spans residues 126–146; sequence YALLAFAAIMYVPALGWEFLA. Residues 147–230 lie on the Cytoplasmic side of the membrane; sequence STRLTSELNF…NFLAKLYLAR (84 aa). Residues 231–251 traverse the membrane as a helical segment; that stretch reads HVLILLLSVVPISYLCTYYAT. The Extracellular segment spans residues 252-295; sequence QKQNEFTCALGASPDGPVGSAGPTVRVSCKLPSVQLQRIIAGVD. The helical transmembrane segment at 296–316 threads the bilayer; sequence IVLLCFMNLIILVNLIHLFIF. The Cytoplasmic portion of the chain corresponds to 317-617; that stretch reads RKSNFIFDKL…LGKADPLTIL (301 aa). The segment covering 394–408 has biased composition (polar residues); sequence TTPTVRDSGIQTVDP. Disordered regions lie at residues 394 to 425 and 485 to 512; these read TTPT…PVVK and AHHY…HTRH. Phosphoserine occurs at positions 593 and 604.

The protein belongs to the pannexin family. As to quaternary structure, homoheptameric. In terms of processing, S-palmitoylated in neural stem and progenitor cells. Cleaved by CASP3 and CASP7 during apoptosis. Cleavage has no effect on it function. In terms of tissue distribution, expression is enriched in central nervous system. Expressed in suprabasal layers of skin epidermis. More aboundantly expressed in skin.

It localises to the cell membrane. The protein resides in the golgi apparatus membrane. The protein localises to the endoplasmic reticulum membrane. It carries out the reaction ATP(in) = ATP(out). The enzyme catalyses chloride(in) = chloride(out). It catalyses the reaction iodide(out) = iodide(in). The catalysed reaction is Na(+)(in) = Na(+)(out). It carries out the reaction D-gluconate(in) = D-gluconate(out). In terms of biological role, ion channel with a slight anion preference. Also able to release ATP. Plays a role in regulating neurogenesis and apoptosis in keratinocytes. In Mus musculus (Mouse), this protein is Pannexin-2 (Panx2).